Here is a 464-residue protein sequence, read N- to C-terminus: ATP synthase subunit beta (464 aa).

ATP is bound at residue 153-160 (GGAGVGKT).

This sequence belongs to the ATPase alpha/beta chains family. As to quaternary structure, F-type ATPases have 2 components, CF(1) - the catalytic core - and CF(0) - the membrane proton channel. CF(1) has five subunits: alpha(3), beta(3), gamma(1), delta(1), epsilon(1). CF(0) has three main subunits: a(1), b(2) and c(9-12). The alpha and beta chains form an alternating ring which encloses part of the gamma chain. CF(1) is attached to CF(0) by a central stalk formed by the gamma and epsilon chains, while a peripheral stalk is formed by the delta and b chains.

Its subcellular location is the cell inner membrane. It carries out the reaction ATP + H2O + 4 H(+)(in) = ADP + phosphate + 5 H(+)(out). Functionally, produces ATP from ADP in the presence of a proton gradient across the membrane. The catalytic sites are hosted primarily by the beta subunits. This chain is ATP synthase subunit beta, found in Burkholderia vietnamiensis (strain G4 / LMG 22486) (Burkholderia cepacia (strain R1808)).